The chain runs to 678 residues: Growth arrest-specific protein 6 (678 aa).

The N-terminal stretch at M1–A30 is a signal peptide. In terms of domain architecture, Gla spans F53–D94. Cysteines 65 and 70 form a disulfide. S71 bears the Phosphoserine; by FAM20C mark. In terms of domain architecture, EGF-like 1; calcium-binding spans L116–D154. Intrachain disulfides connect C120/C133, C125/C142, C144/C153, C160/C171, C167/C180, C182/C195, C201/C212, C207/C221, C223/C236, C242/C251, C247/C260, C262/C277, C283/C570, and C444/C470. In terms of domain architecture, EGF-like 2; calcium-binding spans D156–Q196. The 41-residue stretch at D197–R237 folds into the EGF-like 3; calcium-binding domain. One can recognise an EGF-like 4; calcium-binding domain in the interval D238–E278. 2 Laminin G-like domains span residues G298–C470 and G477–C670. Positions 329 and 331 each coordinate Ca(2+). N-linked (GlcNAc...) asparagine glycosylation occurs at N420. R440 provides a ligand contact to Ca(2+). 2 positions are modified to phosphothreonine: T621 and T637. Y640 is subject to Phosphotyrosine. A disulfide bridge connects residues C643 and C670. D656 provides a ligand contact to Ca(2+).

As to quaternary structure, heterodimer and heterotetramer with AXL. Proteolytically processed after secretion to yield a N-terminal 36 kDa protein and a C-terminal 50 kDa protein including the laminin G-like domains which activates AXL. In terms of processing, gamma-carboxyglutamate residues are formed by vitamin K dependent carboxylation. These residues are essential for the binding of calcium. In terms of tissue distribution, plasma. Isoform 1 and isoform 2 are widely expressed, isoform 1 being expressed at higher levels than isoform 2 in most tissues. Isoform 2 is the predominant form in spleen.

It is found in the secreted. Functionally, ligand for tyrosine-protein kinase receptors AXL, TYRO3 and MER whose signaling is implicated in cell growth and survival, cell adhesion and cell migration. GAS6/AXL signaling plays a role in various processes such as endothelial cell survival during acidification by preventing apoptosis, optimal cytokine signaling during human natural killer cell development, hepatic regeneration, gonadotropin-releasing hormone neuron survival and migration, platelet activation, or regulation of thrombotic responses. Its function is as follows. (Microbial infection) Can bridge virus envelope phosphatidylserine to the TAM receptor tyrosine kinase Axl to mediate viral entry by apoptotic mimicry. Plays a role in Dengue cell entry by apoptotic mimicry. Plays a role in Vaccinia virus cell entry by apoptotic mimicry. Plays a role in ebolavirus and marburgvirus cell entry by apoptotic mimicry. The sequence is that of Growth arrest-specific protein 6 from Homo sapiens (Human).